A 467-amino-acid polypeptide reads, in one-letter code: Hydroxyacid-oxoacid transhydrogenase, mitochondrial (467 aa).

At Lys-445 the chain carries N6-acetyllysine. Ser-452 is subject to Phosphoserine.

This sequence belongs to the iron-containing alcohol dehydrogenase family. Hydroxyacid-oxoacid transhydrogenase subfamily. As to expression, expressed in kidney and liver.

It is found in the mitochondrion. The catalysed reaction is (S)-3-hydroxybutanoate + 2-oxoglutarate = (R)-2-hydroxyglutarate + acetoacetate. The enzyme catalyses 4-hydroxybutanoate + 2-oxoglutarate = (R)-2-hydroxyglutarate + succinate semialdehyde. Functionally, catalyzes the cofactor-independent reversible oxidation of gamma-hydroxybutyrate (GHB) to succinic semialdehyde (SSA) coupled to reduction of 2-ketoglutarate (2-KG) to D-2-hydroxyglutarate (D-2-HG). L-3-hydroxybutyrate (L-3-OHB) is also a substrate for HOT when using 2-KG as hydrogen acceptor, resulting in the formation of D-2-HG. In Rattus norvegicus (Rat), this protein is Hydroxyacid-oxoacid transhydrogenase, mitochondrial (Adhfe1).